The primary structure comprises 500 residues: Archaeal-type glutamate synthase [NADPH] (500 aa).

4Fe-4S ferredoxin-type domains follow at residues 7 to 38 (SKFI…YDED) and 40 to 69 (DQIK…VRNN). Positions 18, 21, 24, 28, 49, 52, 55, and 59 each coordinate [4Fe-4S] cluster.

Belongs to the glutamate synthase family. The cofactor is FMN.

The catalysed reaction is 2 L-glutamate + NADP(+) = L-glutamine + 2-oxoglutarate + NADPH + H(+). In Dehalococcoides mccartyi (strain ATCC BAA-2266 / KCTC 15142 / 195) (Dehalococcoides ethenogenes (strain 195)), this protein is Archaeal-type glutamate synthase [NADPH].